Here is a 313-residue protein sequence, read N- to C-terminus: Ribosomal RNA small subunit methyltransferase H (313 aa).

S-adenosyl-L-methionine contacts are provided by residues 34–36 (GGH), D53, F80, D101, and Q108.

The protein belongs to the methyltransferase superfamily. RsmH family.

It localises to the cytoplasm. It carries out the reaction cytidine(1402) in 16S rRNA + S-adenosyl-L-methionine = N(4)-methylcytidine(1402) in 16S rRNA + S-adenosyl-L-homocysteine + H(+). In terms of biological role, specifically methylates the N4 position of cytidine in position 1402 (C1402) of 16S rRNA. This chain is Ribosomal RNA small subunit methyltransferase H, found in Lacticaseibacillus paracasei (strain ATCC 334 / BCRC 17002 / CCUG 31169 / CIP 107868 / KCTC 3260 / NRRL B-441) (Lactobacillus paracasei).